A 146-amino-acid polypeptide reads, in one-letter code: Large ribosomal subunit protein uL15 (146 aa).

The disordered stretch occupies residues 1 to 54 (MNLTDLRPADGSKQSGNFRRGRGHGSGNGKTAGKGHKGQKARSGAPRVGFEGGQ).

It belongs to the universal ribosomal protein uL15 family. Part of the 50S ribosomal subunit.

Its function is as follows. Binds to the 23S rRNA. The chain is Large ribosomal subunit protein uL15 from Lachnoclostridium phytofermentans (strain ATCC 700394 / DSM 18823 / ISDg) (Clostridium phytofermentans).